The sequence spans 777 residues: Phosphoribosylformylglycinamidine synthase subunit PurL (777 aa).

His50 is an active-site residue. Residues Tyr53 and Lys92 each coordinate ATP. Position 94 (Glu94) interacts with Mg(2+). Substrate contacts are provided by residues 95-98 (SHNH) and Arg117. His96 functions as the Proton acceptor in the catalytic mechanism. Asp118 provides a ligand contact to Mg(2+). A substrate-binding site is contributed by Gln241. Asp269 contributes to the Mg(2+) binding site. 313–315 (ESQ) is a binding site for substrate. Asp520 and Gly557 together coordinate ATP. Position 558 (Asn558) interacts with Mg(2+). Residue Ser560 coordinates substrate.

This sequence belongs to the FGAMS family. In terms of assembly, monomer. Part of the FGAM synthase complex composed of 1 PurL, 1 PurQ and 2 PurS subunits.

It localises to the cytoplasm. The catalysed reaction is N(2)-formyl-N(1)-(5-phospho-beta-D-ribosyl)glycinamide + L-glutamine + ATP + H2O = 2-formamido-N(1)-(5-O-phospho-beta-D-ribosyl)acetamidine + L-glutamate + ADP + phosphate + H(+). The protein operates within purine metabolism; IMP biosynthesis via de novo pathway; 5-amino-1-(5-phospho-D-ribosyl)imidazole from N(2)-formyl-N(1)-(5-phospho-D-ribosyl)glycinamide: step 1/2. Part of the phosphoribosylformylglycinamidine synthase complex involved in the purines biosynthetic pathway. Catalyzes the ATP-dependent conversion of formylglycinamide ribonucleotide (FGAR) and glutamine to yield formylglycinamidine ribonucleotide (FGAM) and glutamate. The FGAM synthase complex is composed of three subunits. PurQ produces an ammonia molecule by converting glutamine to glutamate. PurL transfers the ammonia molecule to FGAR to form FGAM in an ATP-dependent manner. PurS interacts with PurQ and PurL and is thought to assist in the transfer of the ammonia molecule from PurQ to PurL. The polypeptide is Phosphoribosylformylglycinamidine synthase subunit PurL (Trichormus variabilis (strain ATCC 29413 / PCC 7937) (Anabaena variabilis)).